A 297-amino-acid polypeptide reads, in one-letter code: Acetaldehyde dehydrogenase (297 aa).

15-18 provides a ligand contact to NAD(+); it reads SGSI. The active-site Acyl-thioester intermediate is the C130. NAD(+)-binding positions include 162–170 and N272; that span reads SAGIATREN.

Belongs to the acetaldehyde dehydrogenase family.

The catalysed reaction is acetaldehyde + NAD(+) + CoA = acetyl-CoA + NADH + H(+). The protein is Acetaldehyde dehydrogenase (mhpF) of Burkholderia thailandensis (strain ATCC 700388 / DSM 13276 / CCUG 48851 / CIP 106301 / E264).